The following is a 750-amino-acid chain: Photosystem I P700 chlorophyll a apoprotein A1 (750 aa).

The next 8 membrane-spanning stretches (helical) occupy residues 70–93, 156–179, 195–219, 291–309, 346–369, 385–411, 433–455, and 531–549; these read VFSA…FHGA, LYCT…FHYH, LNHH…HVSL, IAHH…GHMY, WHAQ…HHMY, LSLF…IFMV, AIIS…LYIH, and FLVH…LILL. The [4Fe-4S] cluster site is built by Cys-573 and Cys-582. 2 consecutive transmembrane segments (helical) span residues 589–610 and 664–686; these read HVFL…HFSW and LSAY…MFLF. His-675 contacts chlorophyll a'. Chlorophyll a contacts are provided by Met-683 and Tyr-691. Trp-692 contacts phylloquinone. The chain crosses the membrane as a helical span at residues 724–744; that stretch reads AVGVTHYLLGGIATTWAFFLA.

Belongs to the PsaA/PsaB family. In terms of assembly, the PsaA/B heterodimer binds the P700 chlorophyll special pair and subsequent electron acceptors. PSI consists of a core antenna complex that captures photons, and an electron transfer chain that converts photonic excitation into a charge separation. The eukaryotic PSI reaction center is composed of at least 11 subunits. P700 is a chlorophyll a/chlorophyll a' dimer, A0 is one or more chlorophyll a, A1 is one or both phylloquinones and FX is a shared 4Fe-4S iron-sulfur center. serves as cofactor.

The protein localises to the plastid. It is found in the chloroplast thylakoid membrane. It catalyses the reaction reduced [plastocyanin] + hnu + oxidized [2Fe-2S]-[ferredoxin] = oxidized [plastocyanin] + reduced [2Fe-2S]-[ferredoxin]. Its function is as follows. PsaA and PsaB bind P700, the primary electron donor of photosystem I (PSI), as well as the electron acceptors A0, A1 and FX. PSI is a plastocyanin-ferredoxin oxidoreductase, converting photonic excitation into a charge separation, which transfers an electron from the donor P700 chlorophyll pair to the spectroscopically characterized acceptors A0, A1, FX, FA and FB in turn. Oxidized P700 is reduced on the lumenal side of the thylakoid membrane by plastocyanin. In Olimarabidopsis pumila (Dwarf rocket), this protein is Photosystem I P700 chlorophyll a apoprotein A1.